We begin with the raw amino-acid sequence, 314 residues long: Mitotic checkpoint protein BUB3.3 (314 aa).

WD repeat units lie at residues Pro11 to Glu50, Asn52 to Ile90, Arg92 to Phe131, Asp134 to Ala173, Val176 to Lys215, Leu229 to Glu269, and Arg272 to Ile311.

It belongs to the WD repeat BUB3 family. As to quaternary structure, part of the mitotic checkpoint complex (MCC).

Its subcellular location is the nucleus. It is found in the chromosome. The protein resides in the centromere. It localises to the kinetochore. The protein localises to the cytoplasm. Its subcellular location is the cytoskeleton. It is found in the phragmoplast. The protein resides in the spindle. In terms of biological role, has a dual function in spindle-assembly checkpoint signaling and in promoting the establishment of correct kinetochore-microtubule (K-MT) attachments. Promotes the formation of stable end-on bipolar attachments. Necessary for kinetochore localization of BUB1. The BUB1/BUB3 complex plays a role in the inhibition of anaphase-promoting complex or cyclosome (APC/C) when spindle-assembly checkpoint is activated and inhibits the ubiquitin ligase activity of APC/C by phosphorylating its activator CDC20. The chain is Mitotic checkpoint protein BUB3.3 (BUB3.3) from Arabidopsis thaliana (Mouse-ear cress).